Reading from the N-terminus, the 347-residue chain is MTATTDTLTITRPDDWHLHVRDGEPLRTVVPHTAAQFGRAIIMPNLRPPVTTAQQAAEYKQRILAAVPEGVAFEPLMTLYLTDNLPPDEIARARDAGVVAAKLYPAGATTNSDAGVTDLRKTYKTLEAMQKAGLLLLVHGEVTSSDIDLFDREAVFIEQQLIPLRRHFPELKIVFEHITTKEAAQYVKEAGRFTAATITAHHLLYNRNAIFTGGIRPHYYCLPVLKREVHRQALVQAATSGSDKFFLGTDSAPHPAHLKEHATGCAGCYTAHAAIEMYAEAFDNAGALDKLEGFASVHGPAFYGLPRNTGTVTLRRESWTPPDSFAFGEAALKPLRAGEALPWRLVA.

Positions 17 and 19 each coordinate Zn(2+). Substrate is bound by residues 19-21 (HVR) and Asn-45. Residues Lys-102, His-139, and His-177 each coordinate Zn(2+). Residue Lys-102 is modified to N6-carboxylysine. Substrate is bound at residue His-139. Position 222 (Leu-222) interacts with substrate. Asp-250 lines the Zn(2+) pocket. Asp-250 is a catalytic residue. Residues His-254 and Ala-266 each contribute to the substrate site.

The protein belongs to the metallo-dependent hydrolases superfamily. DHOase family. Class II DHOase subfamily. In terms of assembly, homodimer. Zn(2+) is required as a cofactor.

It catalyses the reaction (S)-dihydroorotate + H2O = N-carbamoyl-L-aspartate + H(+). It participates in pyrimidine metabolism; UMP biosynthesis via de novo pathway; (S)-dihydroorotate from bicarbonate: step 3/3. Functionally, catalyzes the reversible cyclization of carbamoyl aspartate to dihydroorotate. This chain is Dihydroorotase, found in Acidovorax sp. (strain JS42).